Consider the following 633-residue polypeptide: Electron transfer flavoprotein-ubiquinone oxidoreductase, mitochondrial (633 aa).

The N-terminal 90 residues, 1 to 90 (MHRFLVKLSS…NGITSSRCIS (90 aa)), are a transit peptide targeting the mitochondrion. 102–116 (VLIVGAGPAGLSAAI) contributes to the FAD binding site. The stretch at 140–161 (VGGHIISGNVFEPLALDELLPH) is an intramembrane region. Residues glycine 334 and glycine 335 each coordinate a ubiquinone. Residues 401–421 (IPYPVFPGGAIIGCSAGFLNV) lie within the membrane without spanning it. Residues cysteine 578, cysteine 602, cysteine 605, and cysteine 608 each coordinate [4Fe-4S] cluster. The 30-residue stretch at 593–622 (PKLQINAQNCLHCKACDIKDPKQNIEWTVP) folds into the 4Fe-4S ferredoxin-type domain.

Belongs to the ETF-QO/FixC family. [4Fe-4S] cluster is required as a cofactor. FAD serves as cofactor.

The protein localises to the mitochondrion inner membrane. The catalysed reaction is a ubiquinone + reduced [electron-transfer flavoprotein] = a ubiquinol + oxidized [electron-transfer flavoprotein] + H(+). Up-regulated by KIN10, by S1-bZIP specific dimers, and also by C/S1 bZIP heterodimers. In terms of biological role, accepts electrons from ETF and reduces ubiquinone. May act downstream of IVD and D2HGDH in the degradation of phytol or chlorophyll during dark-induced senescence and sugar starvation. The protein is Electron transfer flavoprotein-ubiquinone oxidoreductase, mitochondrial (ETFQO) of Arabidopsis thaliana (Mouse-ear cress).